The following is a 342-amino-acid chain: N-acetyl-gamma-glutamyl-phosphate reductase (342 aa).

Cys156 is an active-site residue.

The protein belongs to the NAGSA dehydrogenase family. Type 1 subfamily.

The protein resides in the cytoplasm. It carries out the reaction N-acetyl-L-glutamate 5-semialdehyde + phosphate + NADP(+) = N-acetyl-L-glutamyl 5-phosphate + NADPH + H(+). It functions in the pathway amino-acid biosynthesis; L-arginine biosynthesis; N(2)-acetyl-L-ornithine from L-glutamate: step 3/4. Its function is as follows. Catalyzes the NADPH-dependent reduction of N-acetyl-5-glutamyl phosphate to yield N-acetyl-L-glutamate 5-semialdehyde. The polypeptide is N-acetyl-gamma-glutamyl-phosphate reductase (Pseudoalteromonas atlantica (strain T6c / ATCC BAA-1087)).